The sequence spans 634 residues: Chaperone protein HtpG (634 aa).

An a; substrate-binding region spans residues 1–342 (MTVDTDKQTL…SADLSLNVSR (342 aa)). Residues 343 to 559 (EILQSGPVVD…QGDLGLQMRQ (217 aa)) form a b region. The tract at residues 560 to 634 (LLEASGQAVP…LNKLLLELSA (75 aa)) is c.

It belongs to the heat shock protein 90 family. In terms of assembly, homodimer.

It is found in the cytoplasm. Functionally, molecular chaperone. Has ATPase activity. This is Chaperone protein HtpG from Xanthomonas campestris pv. campestris (strain ATCC 33913 / DSM 3586 / NCPPB 528 / LMG 568 / P 25).